Consider the following 863-residue polypeptide: MVVVMLAAEEPLASTPRRDMDCVGKANTNKKLVQARLPFKRLNPEPKECNEPKRTKGPVAPKCSEPSDQENDQDSSSISHHGPALVNGRGPLDCFMSRRKRSPLRSAPEATIDLTEDSNDSAKQQPAPPIAATCPLSEEKTKTSEGTTEPTIPLTEEETEKDEAEDVDALPLLDITQDSDTEEEEEEEEEEEEQQQEAEVSHGNESVLSTGSTSSASVIASSPEPSKSAPTTPASTSRINAANKVKRRSLKSVQEQEEKQRQRDEKERLKQEAKAAKEKKKEEARKMKEEKEREKKEKKEKDEKERREKKERDEKEKADKLKAKEEQRQMKIEAKLEEKRKKEEEKRLKEEKDRIKAEKAEITRFLQKPKTQLAPKTLASACGKFAPFEIKAHMSLAPLTRVQCEDSVLEDLDRYLAQPDSTLNGLKDWTGHKPRSSGPTRPRHSAQGDCVVITESQKADDGPDRSRYGRMKLLHFHDNYRPAYWGTWSKKSTHISPRCPLRLDKDLLDYEVDSDEEWEEEEPGESLSHSEGDDDDEAGEDDDDDDGFFVPHGYLSEGEGALEDEEGGDPEKQKVRQRMKAREWENELMSKGKVKVLEAVVRGCFWEGEKPLPDFLQPYAVCMLEPLSKDEASTPEQDASRQQRNEKLLTMLLPLLHGNVNSNKVIITEFLEFCRQQTSSPTESLLNTTESIPPRIHVRRIIKENAVYEKRSTFKRCCWYVHADVLARYSQEALPVPCQWSYLTSGANVTRDEHSGSQGNSPTTNSSTTPSNKRKSASSHSITKYMKKCGESEQTEAMETDGFQADTEDDEDDDCIIIGEQSGSSEQDINTSLPQTDRETEPMDTSASETAALALPCPTPATA.

4 disordered regions span residues 1–353, 423–466, 513–579, and 749–863; these read MVVV…EEKD, LNGL…PDRS, DSDE…RQRM, and VTRD…PATA. The segment covering 42 to 54 has biased composition (basic and acidic residues); that stretch reads LNPEPKECNEPKR. The residue at position 111 (threonine 111) is a Phosphothreonine. Serine 118 is subject to Phosphoserine. Residues 144-154 show a composition bias toward low complexity; the sequence is SEGTTEPTIPL. 2 stretches are compositionally biased toward acidic residues: residues 155–168 and 177–196; these read TEEETEKDEAEDVD and QDSDTEEEEEEEEEEEEQQQ. The span at 205-237 shows a compositional bias: low complexity; that stretch reads ESVLSTGSTSSASVIASSPEPSKSAPTTPASTS. Basic and acidic residues-rich tracts occupy residues 254-353 and 457-466; these read QEQE…EEKD and QKADDGPDRS. 2 stretches are compositionally biased toward acidic residues: residues 513–524 and 532–547; these read DSDEEWEEEEPG and GDDDDEAGEDDDDDDG. The segment covering 569 to 579 has biased composition (basic and acidic residues); that stretch reads DPEKQKVRQRM. Residues 760–771 show a composition bias toward low complexity; sequence NSPTTNSSTTPS. Over residues 806-815 the composition is skewed to acidic residues; sequence DTEDDEDDDC. Over residues 821–835 the composition is skewed to polar residues; that stretch reads QSGSSEQDINTSLPQ. Over residues 850–863 the composition is skewed to low complexity; sequence TAALALPCPTPATA.

The protein belongs to the CHAF1A family.

Its subcellular location is the nucleus. Acts as a component of the histone chaperone complex chromatin assembly factor 1 (CAF-1), which assembles histone octamers onto DNA during replication and repair. CAF-1 performs the first step of the nucleosome assembly process, bringing newly synthesized histones H3 and H4 to replicating DNA; histones H2A/H2B can bind to this chromatin precursor subsequent to DNA replication to complete the histone octamer. The chain is Chromatin assembly factor 1 subunit A (chaf1a) from Danio rerio (Zebrafish).